The primary structure comprises 344 residues: Leucine-rich repeat-containing protein 75A (344 aa).

Residues M1–E25 are disordered. The segment covering A11 to G21 has biased composition (low complexity). 2 LRR repeats span residues V204–D217 and L229–L242. The segment at L295 to T344 is disordered.

This sequence belongs to the LRRC75 family.

The protein is Leucine-rich repeat-containing protein 75A (LRRC75A) of Homo sapiens (Human).